We begin with the raw amino-acid sequence, 444 residues long: UDP-N-acetylmuramate--L-alanine ligase (444 aa).

110-116 (GAHGKTS) lines the ATP pocket.

The protein belongs to the MurCDEF family.

It is found in the cytoplasm. The enzyme catalyses UDP-N-acetyl-alpha-D-muramate + L-alanine + ATP = UDP-N-acetyl-alpha-D-muramoyl-L-alanine + ADP + phosphate + H(+). The protein operates within cell wall biogenesis; peptidoglycan biosynthesis. In terms of biological role, cell wall formation. The polypeptide is UDP-N-acetylmuramate--L-alanine ligase (Streptococcus pneumoniae (strain CGSP14)).